The primary structure comprises 106 residues: Nucleoid-associated protein RPD_0086 (106 aa).

It belongs to the YbaB/EbfC family. As to quaternary structure, homodimer.

It is found in the cytoplasm. Its subcellular location is the nucleoid. Binds to DNA and alters its conformation. May be involved in regulation of gene expression, nucleoid organization and DNA protection. The protein is Nucleoid-associated protein RPD_0086 of Rhodopseudomonas palustris (strain BisB5).